The primary structure comprises 313 residues: Foldase protein PrsA (313 aa).

A signal peptide spans 1 to 20 (MKKKLLAGAITLLSVATLAA). A lipid anchor (N-palmitoyl cysteine) is attached at Cys-21. Cys-21 is lipidated: S-diacylglycerol cysteine. The PpiC domain occupies 143 to 241 (TPDVTAQIIR…SQYYIVKLTK (99 aa)).

Belongs to the PrsA family.

The protein resides in the cell membrane. The catalysed reaction is [protein]-peptidylproline (omega=180) = [protein]-peptidylproline (omega=0). In terms of biological role, plays a major role in protein secretion by helping the post-translocational extracellular folding of several secreted proteins. The polypeptide is Foldase protein PrsA (Streptococcus pneumoniae (strain P1031)).